A 151-amino-acid chain; its full sequence is uncharacterized protein (151 aa).

One can recognise a Response regulatory domain in the interval 2 to 133 (KTLIVEDNPK…VFVEAVHYSQ (132 aa)). The residue at position 53 (aspartate 53) is a 4-aspartylphosphate.

This is an uncharacterized protein from Sinorhizobium fredii (strain NBRC 101917 / NGR234).